Here is a 92-residue protein sequence, read N- to C-terminus: Regakine-1 (92 aa).

Positions 1 to 21 are cleaved as a signal peptide; that stretch reads MRVSLAALAFLLTLAVLHSEA. Intrachain disulfides connect Cys32-Cys56 and Cys33-Cys72.

It belongs to the intercrine beta (chemokine CC) family. Plasma serum.

Its subcellular location is the secreted. Chemotactic activity for neutrophils and lymphocytes. Binds to heparin. This chain is Regakine-1, found in Bos taurus (Bovine).